The primary structure comprises 267 residues: Formamidopyrimidine-DNA glycosylase (267 aa).

Catalysis depends on Pro-2, which acts as the Schiff-base intermediate with DNA. Residue Glu-3 is the Proton donor of the active site. The active-site Proton donor; for beta-elimination activity is Lys-58. DNA is bound by residues His-91, Arg-110, and Arg-152. The FPG-type zinc-finger motif lies at 233–267; the sequence is DVYGRGHGTCTSCGGALEAVRLGNRSTVFCPRCQQ. The active-site Proton donor; for delta-elimination activity is the Arg-257.

Belongs to the FPG family. In terms of assembly, monomer. The cofactor is Zn(2+).

The catalysed reaction is Hydrolysis of DNA containing ring-opened 7-methylguanine residues, releasing 2,6-diamino-4-hydroxy-5-(N-methyl)formamidopyrimidine.. It carries out the reaction 2'-deoxyribonucleotide-(2'-deoxyribose 5'-phosphate)-2'-deoxyribonucleotide-DNA = a 3'-end 2'-deoxyribonucleotide-(2,3-dehydro-2,3-deoxyribose 5'-phosphate)-DNA + a 5'-end 5'-phospho-2'-deoxyribonucleoside-DNA + H(+). Functionally, involved in base excision repair of DNA damaged by oxidation or by mutagenic agents. Acts as a DNA glycosylase that recognizes and removes damaged bases. Has a preference for oxidized purines, such as 7,8-dihydro-8-oxoguanine (8-oxoG). Has AP (apurinic/apyrimidinic) lyase activity and introduces nicks in the DNA strand. Cleaves the DNA backbone by beta-delta elimination to generate a single-strand break at the site of the removed base with both 3'- and 5'-phosphates. The protein is Formamidopyrimidine-DNA glycosylase of Pelobacter propionicus (strain DSM 2379 / NBRC 103807 / OttBd1).